A 208-amino-acid chain; its full sequence is Large ribosomal subunit protein uL4 (208 aa).

The disordered stretch occupies residues 45 to 84; that stretch reads RQGTHKVKNRSEVRGGGKKPYRQKGTGHARQGSSRSGLMS. The span at 60 to 71 shows a compositional bias: basic residues; that stretch reads GGKKPYRQKGTG.

Belongs to the universal ribosomal protein uL4 family. As to quaternary structure, part of the 50S ribosomal subunit.

In terms of biological role, one of the primary rRNA binding proteins, this protein initially binds near the 5'-end of the 23S rRNA. It is important during the early stages of 50S assembly. It makes multiple contacts with different domains of the 23S rRNA in the assembled 50S subunit and ribosome. Its function is as follows. Forms part of the polypeptide exit tunnel. The sequence is that of Large ribosomal subunit protein uL4 from Prosthecochloris aestuarii (strain DSM 271 / SK 413).